The following is a 185-amino-acid chain: Calcium-binding protein CML37 (185 aa).

Residues 1–12 (MTLAKNQKSSLS) are compositionally biased toward polar residues. The tract at residues 1–45 (MTLAKNQKSSLSRLYKKVSSKRSESSRNLEDESRTSSNSSGSSSL) is disordered. The segment covering 21 to 34 (KRSESSRNLEDESR) has biased composition (basic and acidic residues). The segment covering 35–44 (TSSNSSGSSS) has biased composition (low complexity). 4 consecutive EF-hand domains span residues 45–80 (LNVN…LGGA), 81–116 (LSSR…EDGS), 119–154 (ERRK…LGES), and 155–185 (CTVD…LMMR). Asp-58, Asn-60, Asp-62, Lys-64, Glu-69, Asp-94, Asp-96, Asp-98, and Glu-105 together coordinate Ca(2+). Residues Asp-168, Asn-170, Asp-172, and Glu-179 each contribute to the Ca(2+) site.

In terms of assembly, binds to ABCG36. Expressed in cotyledons, stipule, young leaves and at the hypocotyl-root junction. In mature root, expressed in the stele, cortex, emerging lateral root, root tip and root cap. In mature plant, expressed at the base of cauline and floral branches, and in rosette and cauline leaves. Expressed from stage 9 to 14 of flower development in anthers. At stage 15, expressed in carpel, sepals, petals and pollen until dehiscence. Expressed in developing seeds and young siliques.

In terms of biological role, potential calcium sensor that binds calcium in vitro. The chain is Calcium-binding protein CML37 from Arabidopsis thaliana (Mouse-ear cress).